Consider the following 34-residue polypeptide: MSDIN-like toxin proprotein 4 (34 aa).

Positions 1-10 (MSDINATRLP) are excised as a propeptide. The segment at residues 11 to 17 (VWIGYSP) is a cross-link (cyclopeptide (Val-Pro)). A propeptide spanning residues 18-34 (CVGDDCIALLTRGEGLC) is cleaved from the precursor.

This sequence belongs to the MSDIN fungal toxin family. In terms of processing, processed by the macrocyclase-peptidase enzyme POPB to yield a toxic cyclic heptapeptide. POPB first removes 10 residues from the N-terminus. Conformational trapping of the remaining peptide forces the enzyme to release this intermediate rather than proceed to macrocyclization. The enzyme rebinds the remaining peptide in a different conformation and catalyzes macrocyclization of the N-terminal 7 residues. As to expression, expressed in basidiocarps.

Probable toxin that belongs to the MSDIN-like toxin family responsible for a large number of food poisoning cases and deaths. The protein is MSDIN-like toxin proprotein 4 of Amanita exitialis (Guangzhou destroying angel).